Here is a 387-residue protein sequence, read N- to C-terminus: Palmitoyltransferase ZDHHC16A (387 aa).

Transmembrane regions (helical) follow at residues 73-93 and 106-126; these read WFGM…VFIA and SPGW…MIVF. Positions 150 to 200 constitute a DHHC domain; it reads SVCKKCIIPKPARSHHCGICKTCILKMDHHCPWLNNCVGHFNHRYFFSFCL. The active-site S-palmitoyl cysteine intermediate is the cysteine 180. 3 helical membrane-spanning segments follow: residues 198–218, 236–256, and 281–301; these read FCLF…HLFI, GVPV…GVAG, and VIYM…LTLW.

Belongs to the DHHC palmitoyltransferase family. Expressed in the central nervous system (CNS). Expressed in the developing forebrain, and especially in the telencephalon.

It localises to the endoplasmic reticulum membrane. The enzyme catalyses L-cysteinyl-[protein] + hexadecanoyl-CoA = S-hexadecanoyl-L-cysteinyl-[protein] + CoA. Functionally, palmitoyl acyltransferase that mediates palmitoylation of proteins and is required during embryonic heart development. Involved in the proliferation of neural stem cells by regulating the FGF/ERK pathway. Involved in the proliferation of neural stem cells by regulating the FGF/ERK pathway. This is Palmitoyltransferase ZDHHC16A from Danio rerio (Zebrafish).